The chain runs to 555 residues: Potassium-transporting ATPase potassium-binding subunit (555 aa).

A run of 10 helical transmembrane segments spans residues 2 to 22, 60 to 80, 130 to 150, 173 to 193, 246 to 266, 278 to 298, 374 to 394, 412 to 432, 483 to 503, and 525 to 545; these read IWVA…PTGI, QYAL…YFIF, IGIT…VMAF, VFLP…VPQT, MSNI…PFTY, ILFV…TTSE, AGFV…GLMV, LIAV…ALAL, LVMF…AASL, and GIFI…MLVL.

The protein belongs to the KdpA family. As to quaternary structure, the system is composed of three essential subunits: KdpA, KdpB and KdpC.

It localises to the cell membrane. In terms of biological role, part of the high-affinity ATP-driven potassium transport (or Kdp) system, which catalyzes the hydrolysis of ATP coupled with the electrogenic transport of potassium into the cytoplasm. This subunit binds the extracellular potassium ions and delivers the ions to the membrane domain of KdpB through an intramembrane tunnel. The chain is Potassium-transporting ATPase potassium-binding subunit from Bacillus cereus (strain AH820).